Here is a 435-residue protein sequence, read N- to C-terminus: MLDIKKIRQEPDFYKEKLATRGVKPEEIDEVIALDKKRRELLQQTETMKAQRNEASKKIGEAKRNGESADAAIKETRELGDKIKELDTEVEANDAELHDKMAHLPNVPHDGVPVSLTEDGAVELRKVGKVRDFDFEPKHHWDIGENLGILDFDRAGKVSGARFVYYLGLGAQLERAVYNFMLDEHMKEGYTEVLPPYIVNADSMYGTGQFPKFKEGVYQVNGEDMTLIPTAEVPLTNYYRGEVIPTEELPVYVTALTPSFRSEAGAAGRDTRGLIRMHQFNKVEMVKYTKPENSWDELEKMTANAENILKKLNLPYHVITLTTGDMSFTASETHDLELWMPAQNKYREVSSCSNCLDFQARRMHTQYRDENGKLQYVHTLNGSGLAVGRTVAAILENYQNADGSVTIPEVLVPYMHGVTKITKENAVPFRNKVNK.

Positions 48–68 are disordered; the sequence is MKAQRNEASKKIGEAKRNGES. A compositionally biased stretch (basic and acidic residues) spans 49-68; sequence KAQRNEASKKIGEAKRNGES. 230-232 serves as a coordination point for L-serine; that stretch reads TAE. An ATP-binding site is contributed by 261–263; that stretch reads RSE. Position 284 (Glu-284) interacts with L-serine. 348–351 provides a ligand contact to ATP; it reads EVSS. Residue Ser-383 participates in L-serine binding.

This sequence belongs to the class-II aminoacyl-tRNA synthetase family. Type-1 seryl-tRNA synthetase subfamily. In terms of assembly, homodimer. The tRNA molecule binds across the dimer.

The protein localises to the cytoplasm. The enzyme catalyses tRNA(Ser) + L-serine + ATP = L-seryl-tRNA(Ser) + AMP + diphosphate + H(+). It carries out the reaction tRNA(Sec) + L-serine + ATP = L-seryl-tRNA(Sec) + AMP + diphosphate + H(+). It functions in the pathway aminoacyl-tRNA biosynthesis; selenocysteinyl-tRNA(Sec) biosynthesis; L-seryl-tRNA(Sec) from L-serine and tRNA(Sec): step 1/1. Functionally, catalyzes the attachment of serine to tRNA(Ser). Is also able to aminoacylate tRNA(Sec) with serine, to form the misacylated tRNA L-seryl-tRNA(Sec), which will be further converted into selenocysteinyl-tRNA(Sec). This Limosilactobacillus reuteri (strain DSM 20016) (Lactobacillus reuteri) protein is Serine--tRNA ligase.